Reading from the N-terminus, the 292-residue chain is Protein LRATD1 (292 aa).

Ser-38 is modified (phosphoserine). Positions 133 to 228 (PAPEPPAPAP…CRFGKREFKA (96 aa)) constitute an LRAT domain.

Belongs to the LRATD family. Only detected in testis. Highly expressed in colon cancer cells.

The protein resides in the cytoplasm. Its function is as follows. May play a role in cell morphology and motility. In Homo sapiens (Human), this protein is Protein LRATD1.